The sequence spans 142 residues: Small heat shock protein IbpB (142 aa).

The sHSP domain occupies serine 26–arginine 137.

It belongs to the small heat shock protein (HSP20) family. As to quaternary structure, homodimer. Forms homomultimers of about 100-150 subunits at optimal growth temperatures. Conformation changes to oligomers at high temperatures or high ionic concentrations. The decrease in size of the multimers is accompanied by an increase in chaperone activity.

It localises to the cytoplasm. Associates with aggregated proteins, together with IbpA, to stabilize and protect them from irreversible denaturation and extensive proteolysis during heat shock and oxidative stress. Aggregated proteins bound to the IbpAB complex are more efficiently refolded and reactivated by the ATP-dependent chaperone systems ClpB and DnaK/DnaJ/GrpE. Its activity is ATP-independent. The chain is Small heat shock protein IbpB from Salmonella newport (strain SL254).